The following is a 1412-amino-acid chain: DNA-directed RNA polymerase subunit beta' (1412 aa).

Positions 70, 72, 85, and 88 each coordinate Zn(2+). Residues aspartate 460, aspartate 462, and aspartate 464 each coordinate Mg(2+). Positions 819, 893, 900, and 903 each coordinate Zn(2+). The disordered stretch occupies residues 1393–1412 (EAFEFGTPSAPAEEPQHPAE).

It belongs to the RNA polymerase beta' chain family. The RNAP catalytic core consists of 2 alpha, 1 beta, 1 beta' and 1 omega subunit. When a sigma factor is associated with the core the holoenzyme is formed, which can initiate transcription. The cofactor is Mg(2+). Zn(2+) serves as cofactor.

The enzyme catalyses RNA(n) + a ribonucleoside 5'-triphosphate = RNA(n+1) + diphosphate. DNA-dependent RNA polymerase catalyzes the transcription of DNA into RNA using the four ribonucleoside triphosphates as substrates. In Burkholderia mallei (strain NCTC 10229), this protein is DNA-directed RNA polymerase subunit beta'.